Reading from the N-terminus, the 91-residue chain is Small ribosomal subunit protein uS19 (91 aa).

It belongs to the universal ribosomal protein uS19 family.

Protein S19 forms a complex with S13 that binds strongly to the 16S ribosomal RNA. The sequence is that of Small ribosomal subunit protein uS19 from Exiguobacterium sp. (strain ATCC BAA-1283 / AT1b).